A 239-amino-acid chain; its full sequence is tRNA (guanine-N(1)-)-methyltransferase (239 aa).

S-adenosyl-L-methionine is bound by residues Gly-109 and 128–133 (IGDYVL).

This sequence belongs to the RNA methyltransferase TrmD family. In terms of assembly, homodimer.

The protein resides in the cytoplasm. The enzyme catalyses guanosine(37) in tRNA + S-adenosyl-L-methionine = N(1)-methylguanosine(37) in tRNA + S-adenosyl-L-homocysteine + H(+). In terms of biological role, specifically methylates guanosine-37 in various tRNAs. This Thermus thermophilus (strain ATCC 27634 / DSM 579 / HB8) protein is tRNA (guanine-N(1)-)-methyltransferase.